A 689-amino-acid chain; its full sequence is Protein asunder (689 aa).

The stretch at 521 to 550 forms a coiled coil; sequence NGARLKLSKAKDQYRLLYRELEQLIQLNAT. Disordered stretches follow at residues 591-619 and 669-689; these read SPERLEPISSVGASGSSNSNSLLKASKRR and KDAVTTGASITPNVKEESVRS. Over residues 599–614 the composition is skewed to low complexity; sequence SSVGASGSSNSNSLLK. The Nuclear localization signal (NLS) motif lies at 613 to 619; it reads LKASKRR.

This sequence belongs to the Integrator subunit 13 family. As to quaternary structure, belongs to the multiprotein complex Integrator, at least composed of IntS1, IntS2, IntS3, IntS4, omd/IntS5, IntS6, defl/IntS7, IntS8, IntS9, IntS10, IntS11, IntS12, asun/IntS13, IntS14 and IntS15. The core complex associates with protein phosphatase 2A subunits mts/PP2A and Pp2A-29B, to form the Integrator-PP2A (INTAC) complex. Post-translationally, phosphorylated.

Its subcellular location is the nucleus. The protein resides in the cytoplasm. It is found in the perinuclear region. In terms of biological role, component of the integrator complex, a multiprotein complex that terminates RNA polymerase II (Pol II) transcription in the promoter-proximal region of genes. The integrator complex provides a quality checkpoint during transcription elongation by driving premature transcription termination of transcripts that are unfavorably configured for transcriptional elongation: the complex terminates transcription by (1) catalyzing dephosphorylation of the C-terminal domain (CTD) of Pol II subunit Polr2A/Rbp1 and Spt5, and (2) degrading the exiting nascent RNA transcript via endonuclease activity. The integrator complex is also involved in the 3'-end processing of the U7 snRNA, and also the spliceosomal snRNAs U1, U2, U4 and U5. The polypeptide is Protein asunder (asun) (Drosophila simulans (Fruit fly)).